The sequence spans 198 residues: Ion-translocating oxidoreductase complex subunit B (198 aa).

The hydrophobic stretch occupies residues 1 to 28; it reads MIITTVYFILVAIAVLALIFGAILGFAS. The 4Fe-4S domain maps to 34 to 92; that stretch reads EADPIVEKIDALLPQSQCGQCGYPGCKPYAEAIANGDDITKCIPGGQTVIVNIAELMGV. Residues C51, C54, C59, C75, C115, C118, C121, C125, C145, C148, C151, and C155 each contribute to the [4Fe-4S] cluster site. 2 consecutive 4Fe-4S ferredoxin-type domains span residues 106–135 and 136–165; these read MVAF…GTNK and AMHT…MIKV.

The protein belongs to the 4Fe4S bacterial-type ferredoxin family. RnfB subfamily. In terms of assembly, the complex is composed of six subunits: RnfA, RnfB, RnfC, RnfD, RnfE and RnfG. The cofactor is [4Fe-4S] cluster.

The protein resides in the cell inner membrane. Part of a membrane-bound complex that couples electron transfer with translocation of ions across the membrane. This chain is Ion-translocating oxidoreductase complex subunit B, found in Pasteurella multocida (strain Pm70).